The chain runs to 555 residues: Splicing factor U2af large subunit A (555 aa).

Residues 1-165 (MRDYEGNGVD…ISGFDMAPPT (165 aa)) form a disordered region. 2 stretches are compositionally biased toward basic and acidic residues: residues 23–81 (ISRD…EKDR) and 90–127 (RDRSDRRERERTRDRDEDDLHRSRDYDRRRDNDKDRED). Residues 143 to 155 (SKSRSRSPSKSKR) show a composition bias toward basic residues. RRM domains are found at residues 221–304 (RRVY…RPSD), 341–419 (DRIF…RANQ), and 460–546 (EVVT…YPEN).

The protein belongs to the splicing factor SR family. Expressed in stems, leaves and apical buds.

Its subcellular location is the nucleus. Necessary for the splicing of pre-mRNA. Binds to the U -enriched regions of plant introns. This is Splicing factor U2af large subunit A (U2AF65A) from Nicotiana plumbaginifolia (Leadwort-leaved tobacco).